The primary structure comprises 277 residues: uncharacterized protein (277 aa).

Residues 1–25 form the signal peptide; the sequence is MNKKSIWSKTAFGSLFLLLGTAFTA. A lipid anchor (N-palmitoyl cysteine) is attached at Cys-26. Residue Cys-26 is the site of S-diacylglycerol cysteine attachment.

Belongs to the MG439/MG440 family.

The protein resides in the cell membrane. This is an uncharacterized protein from Mycoplasma pneumoniae (strain ATCC 29342 / M129 / Subtype 1) (Mycoplasmoides pneumoniae).